The following is a 107-amino-acid chain: UPF0145 protein PM1668 (107 aa).

It belongs to the UPF0145 family.

The chain is UPF0145 protein PM1668 from Pasteurella multocida (strain Pm70).